The chain runs to 122 residues: Hexon-interlacing protein (122 aa).

Residues 72–106 (VTELNESIDELQQKMTELEKRLKIMEEKIEEIKLA) adopt a coiled-coil conformation.

Belongs to the adenoviridae hexon-interlacing protein family. As to quaternary structure, homotrimer. Interacts with hexon protein; this interaction tethers the hexons together. Self-interacts with adjacent proteins. Interacts with kinesin light chain KLC1; this interaction leads to capsid disruption at the nuclear pore complex during virus entry into host cell.

It is found in the virion. The protein localises to the host nucleus. Functionally, structural component of the virion that acts as a cement protein on the capsid exterior and forms triskelion structures consisting of three molecules that stabilize three hexon trimers at the center of each icosahedral facet and fixes the peripentonal hexons. Dispensable for assembly. During virus entry, recruits the anterograde motor kinesin-1 to the capsid docked at the nuclear pore complex thereby subjecting the docked capsid to a pulling force. The resulting tension leads to capsid disruption, dispersion of capsid fragments toward cell periphery and eventually viral DNA entry into the host nucleus. This is Hexon-interlacing protein from Tupaiidae (tree shrews).